Here is a 395-residue protein sequence, read N- to C-terminus: Trans-2-enoyl-CoA reductase [NADH] (395 aa).

Residues 47–52 (GASTGY), 73–74 (FE), 110–111 (DA), and 138–139 (LA) contribute to the NAD(+) site. Tyr-224 contacts substrate. Residue Tyr-234 is the Proton donor of the active site. Residues Lys-243 and 272 to 274 (VVT) each bind NAD(+).

This sequence belongs to the TER reductase family. In terms of assembly, monomer.

It catalyses the reaction a 2,3-saturated acyl-CoA + NAD(+) = a (2E)-enoyl-CoA + NADH + H(+). Its pathway is lipid metabolism; fatty acid biosynthesis. Functionally, involved in the fatty acid synthesis (FAS II). Catalyzes the reduction of a carbon-carbon double bond in an enoyl moiety that is covalently linked to a coenzyme A (CoA). The polypeptide is Trans-2-enoyl-CoA reductase [NADH] (Ruminiclostridium cellulolyticum (strain ATCC 35319 / DSM 5812 / JCM 6584 / H10) (Clostridium cellulolyticum)).